The sequence spans 326 residues: MYGIEYTTILTFFVSFIILDYTIKTLTRAMDFIIYRFLLVVVILSPLLTAQNYGINLPITGSMDTAYANSTQEENFLVSTLCLYYPNEVVSELNDDSWKNTLSQLFLTKGWPTGSVYFNEYSDIASFSINPQLYCDYNIVVVKYSTELQLDISELANLILNEWLCNPMDITLYYYQQTDETNKWISTGTSCTVKVCPLNTQTLGIGCLTTDTETFEEVATLEKLVITDVVDGVNHKINLTTATCTIRNCKKLGPRENVAIIQVGRSSTIDITADPTTMPQTERMMRINWKKWWQVFYTIVDYVNQIIQVMSKRSRSLDAAEFYYRV.

Positions 1 to 50 (MYGIEYTTILTFFVSFIILDYTIKTLTRAMDFIIYRFLLVVVILSPLLTA) are cleaved as a signal peptide. N-linked (GlcNAc...) asparagine; by host glycosylation is present at asparagine 69. 4 disulfides stabilise this stretch: cysteine 82–cysteine 135, cysteine 165–cysteine 249, cysteine 191–cysteine 244, and cysteine 196–cysteine 207. Ca(2+) is bound at residue aspartate 95. Residues 165–167 (CNP) are CNP motif; interaction with ITGAV/ITGB3. Residues glutamine 177, glycine 206, threonine 214, glutamate 216, aspartate 228, valine 229, and aspartate 231 each coordinate Ca(2+). N-linked (GlcNAc...) asparagine; by host glycosylation occurs at asparagine 238. The interval 253 to 255 (GPR) is GPR motif; interaction with ITGAX/ITGB2. Aspartate 301 is a Ca(2+) binding site.

Belongs to the rotavirus VP7 family. In terms of assembly, homotrimer; disulfide-linked. 2 Ca(2+) ions bound at each subunit interface in the trimer hold the trimer together. Interacts with the intermediate capsid protein VP6. Interacts with the outer capsid protein VP5*. N-glycosylated. In terms of processing, the N-terminus is blocked possibly by pyroglutamic acid.

Its subcellular location is the virion. The protein resides in the host endoplasmic reticulum lumen. Its function is as follows. Calcium-binding protein that interacts with rotavirus cell receptors once the initial attachment by VP4 has been achieved. Rotavirus attachment and entry into the host cell probably involves multiple sequential contacts between the outer capsid proteins VP4 and VP7, and the cell receptors. Following entry into the host cell, low intracellular or intravesicular Ca(2+) concentration probably causes the calcium-stabilized VP7 trimers to dissociate from the virion. This step is probably necessary for the membrane-disrupting entry step and the release of VP4, which is locked onto the virion by VP7. The chain is Outer capsid glycoprotein VP7 from Equus caballus (Horse).